A 456-amino-acid chain; its full sequence is MALWGGRFSQESSALFKLFNDSLPVDFRLIEQDIVGSIAWASAITQVGILTEKECTELHQALNELLAETQDSPELIIASGAEDIHSFVEQSLIAKVGDLGKKLHTGRSRNDQVATDLKLWCKKEGEQLLGLLANLRAALIGLAEREIDAVMPGYTHLQRAQPILFGHWCLAYVEMFERDISRLQDALKRADTCPLGTGALAGTAYPMDRVKLAKSLGFASPTLNSLDTVSDRDHVIEICSNASISMMHLSRMAEDLIFFNSGEAGFIELDDEVTSGSSLMPQKKNPDALELIRGKTGRVYGALMGILTTMKALPLAYNKDMQEDKEGLFDVMDSWSICLEMAALVLSGLQVNREKTLKAAKQGYANSTELADYLVAKGMPFREAHHVVGEAVVSAIAKQTPLEELTLVELQAFSAAIEADVYDCLTIESCLAKREALGGTSLSQVRNALATKKENC.

Belongs to the lyase 1 family. Argininosuccinate lyase subfamily.

It localises to the cytoplasm. The catalysed reaction is 2-(N(omega)-L-arginino)succinate = fumarate + L-arginine. It functions in the pathway amino-acid biosynthesis; L-arginine biosynthesis; L-arginine from L-ornithine and carbamoyl phosphate: step 3/3. This Shewanella pealeana (strain ATCC 700345 / ANG-SQ1) protein is Argininosuccinate lyase.